Consider the following 322-residue polypeptide: Replication factor C small subunit (322 aa).

Residue 50–57 (GPAGTGKT) coordinates ATP.

Belongs to the activator 1 small subunits family. RfcS subfamily. In terms of assembly, heteromultimer composed of small subunits (RfcS) and large subunits (RfcL).

Functionally, part of the RFC clamp loader complex which loads the PCNA sliding clamp onto DNA. This chain is Replication factor C small subunit, found in Halobacterium salinarum (strain ATCC 700922 / JCM 11081 / NRC-1) (Halobacterium halobium).